Consider the following 1195-residue polypeptide: Probable beta-tubulin polyglutamylase (1195 aa).

Residues 1-110 (MSQKDIYNKY…QTEMTDNQNE (110 aa)) form a disordered region. Acidic residues-rich tracts occupy residues 17 to 27 (DQQEEDDDENQ) and 44 to 79 (QGEDLDEDQGVIGEDDEEQEESYDEEDEEEDDEENN). Coiled-coil stretches lie at residues 59 to 103 (DEEQ…QQTE) and 144 to 260 (QDMD…QSEQ). Low complexity predominate over residues 80–89 (QDQQNNSESN). Residues 90 to 110 (LQYDKTNQKNQQTEMTDNQNE) are compositionally biased toward polar residues. The disordered stretch occupies residues 281 to 343 (PKNDVDQYTG…NKKEQAKKQQ (63 aa)). The segment covering 294-316 (DSGESDEEANNEDDDEDEDDESE) has biased composition (acidic residues). The span at 322 to 334 (RKNKAQLLKKKNN) shows a compositional bias: basic residues. Positions 350–703 (KQTLVLNVAD…TCKAKNEIIN (354 aa)) constitute a TTL domain. ATP contacts are provided by residues 500–503 (QRYL), lysine 513, and aspartate 515. Residues 674-756 (PLDSYIKKNT…GFERIFPMED (83 aa)) are c-MTBD region. A disordered region spans residues 783-862 (RNTKKVTEDP…ETIQCEDQEQ (80 aa)). The segment covering 825 to 849 (PNSQTTINKGIPGQNGQRPSSSQLN) has biased composition (polar residues). Residues 850–860 (EEGETIQCEDQ) show a composition bias toward acidic residues.

It is found in the cytoplasm. The protein localises to the cytoskeleton. Its subcellular location is the cell projection. The protein resides in the cilium. It localises to the cilium basal body. Functionally, probable tubulin polyglutamylase with a strong preference for beta-tubulin. The protein is Probable beta-tubulin polyglutamylase (Ttll6a) of Tetrahymena thermophila (strain SB210).